Reading from the N-terminus, the 141-residue chain is MQLTSFTDYGLRALIYMASLPEGLMTSISEVTDVYGVSRNHMVKIINQLSRAGYVTAVRGKNGGIRLGKPASAIRIGDVVRELEPLSLVNCSSEFCHITPACRLKQALSKAVQSFLTELDNYTLADLVEENQPLYKLLLVE.

In terms of domain architecture, HTH rrf2-type spans 2-129 (QLTSFTDYGL…DNYTLADLVE (128 aa)). Residues 28-51 (ISEVTDVYGVSRNHMVKIINQLSR) constitute a DNA-binding region (H-T-H motif). 3 residues coordinate [2Fe-2S] cluster: Cys91, Cys96, and Cys102.

The cofactor is [2Fe-2S] cluster.

Its function is as follows. Nitric oxide-sensitive repressor of genes involved in protecting the cell against nitrosative stress. May require iron for activity. The chain is HTH-type transcriptional repressor NsrR from Escherichia coli O157:H7 (strain EC4115 / EHEC).